Here is a 720-residue protein sequence, read N- to C-terminus: Transcriptional regulator EFH1 (720 aa).

2 stretches are compositionally biased toward polar residues: residues 1 to 15 (MNGIMTTSSHSNFYN) and 22 to 35 (PSSSDHIPGPSSQD). Disordered stretches follow at residues 1-111 (MNGI…SSST), 181-223 (SFQM…HQSQ), 245-336 (QKEF…TIAT), and 365-437 (YQRQ…PQPD). The span at 71–105 (QQNQSESQQSRQSHHLQQQQQQQQQQQQNQHNQQN) shows a compositional bias: low complexity. Residues 181–200 (SFQMGSVSTPDTQNSSIRSK) are compositionally biased toward polar residues. Residues 201-223 (QQQQHSYQQQQPQQLSQSQHQSQ) show a composition bias toward low complexity. Polar residues predominate over residues 254–266 (GDQTLVPQTNSKL). A compositionally biased stretch (low complexity) spans 267 to 304 (QQQISETSYSQQQQQQQSPPTPQKQQQQQHYQHQTTQP). Polar residues predominate over residues 313–336 (YSQTGGPSSSPVAGNISIPTTIAT). The span at 366 to 399 (QRQQQQQQQHQQPQSQQMSQISQLSQQIPPQGSS) shows a compositional bias: low complexity. Residues 400–413 (KNISINSTPTKSRA) are compositionally biased toward polar residues. The segment covering 414–433 (SSITTRSGRQSRSTSISSFI) has biased composition (low complexity). An HTH APSES-type domain is found at 446-552 (KVATTRWDDE…KNIKQYFLTK (107 aa)). The H-T-H motif DNA-binding region spans 480–501 (GTKLLNVIGMTRGKRDGILKTE). The segment covering 569–582 (GMTRQREEVRREGR) has biased composition (basic and acidic residues). A disordered region spans residues 569–662 (GMTRQREEVR…KNSESKLLET (94 aa)). Over residues 613–644 (VPGDDEEEEDDDDDDDDDEEEGEQDDEEEEDG) the composition is skewed to acidic residues. The span at 645–654 (SSTSMSSSKN) shows a compositional bias: low complexity.

This sequence belongs to the EFG1/PHD1/stuA family.

The protein resides in the nucleus. Its function is as follows. Transcription factor that regulates filamentous growth through repression of EFG1. Regulates the level of colonizing fungi, favoring commensalism as opposed to candidiasis. This Candida albicans (strain SC5314 / ATCC MYA-2876) (Yeast) protein is Transcriptional regulator EFH1 (EFH1).